A 190-amino-acid polypeptide reads, in one-letter code: Vexin (190 aa).

A disordered region spans residues 88-156; it reads AEKKASRFSR…DEATLPLTAH (69 aa). Residues 117 to 133 are compositionally biased toward polar residues; the sequence is TDKQNAPTVPASPSSYE. The span at 136 to 149 shows a compositional bias: basic and acidic residues; the sequence is GCREQRPENPKDEA.

This sequence belongs to the vexin family. Expressed in differentiating progenitors in the developing central nervous system (CNS).

Its subcellular location is the cell membrane. It localises to the nucleus. Its function is as follows. Required for neurogenesis in the neural plate and retina. Cooperates with cell cycle inhibitor cdknx/p27(xic1) to enhance neurogenesis and increase the levels of the neuronal determination factor neurog2/X-ngngr-1. This Xenopus laevis (African clawed frog) protein is Vexin.